The primary structure comprises 156 residues: Riboflavin synthase (156 aa).

This sequence belongs to the DMRL synthase family.

The enzyme catalyses 2 6,7-dimethyl-8-(1-D-ribityl)lumazine + H(+) = 5-amino-6-(D-ribitylamino)uracil + riboflavin. The protein operates within cofactor biosynthesis; riboflavin biosynthesis; riboflavin from 2-hydroxy-3-oxobutyl phosphate and 5-amino-6-(D-ribitylamino)uracil: step 2/2. This is Riboflavin synthase (ribC) from Methanocaldococcus jannaschii (strain ATCC 43067 / DSM 2661 / JAL-1 / JCM 10045 / NBRC 100440) (Methanococcus jannaschii).